A 477-amino-acid chain; its full sequence is UDP-N-acetylmuramoylalanine--D-glutamate ligase (477 aa).

125–131 (GTNGKST) lines the ATP pocket.

The protein belongs to the MurCDEF family.

The protein localises to the cytoplasm. It carries out the reaction UDP-N-acetyl-alpha-D-muramoyl-L-alanine + D-glutamate + ATP = UDP-N-acetyl-alpha-D-muramoyl-L-alanyl-D-glutamate + ADP + phosphate + H(+). It functions in the pathway cell wall biogenesis; peptidoglycan biosynthesis. Cell wall formation. Catalyzes the addition of glutamate to the nucleotide precursor UDP-N-acetylmuramoyl-L-alanine (UMA). This is UDP-N-acetylmuramoylalanine--D-glutamate ligase from Rhodospirillum rubrum (strain ATCC 11170 / ATH 1.1.1 / DSM 467 / LMG 4362 / NCIMB 8255 / S1).